The chain runs to 508 residues: uncharacterized protein (508 aa).

Positions 3–163 (KAIAYMRFSS…LSWKKKRQDA (161 aa)) constitute a Resolvase/invertase-type recombinase catalytic domain. Residue S11 is the O-(5'-phospho-DNA)-serine intermediate of the active site. A DNA-binding region (recombinase) is located at residues 175–290 (PRWLSLDDKR…QEIRLAPFGI (116 aa)).

This is an uncharacterized protein from Escherichia coli (strain K12).